A 190-amino-acid chain; its full sequence is Threonylcarbamoyl-AMP synthase (190 aa).

A YrdC-like domain is found at 7 to 190 (TGSIAAAVDL…ALTGELFRQG (184 aa)).

Belongs to the SUA5 family. TsaC subfamily.

The protein resides in the cytoplasm. The catalysed reaction is L-threonine + hydrogencarbonate + ATP = L-threonylcarbamoyladenylate + diphosphate + H2O. In terms of biological role, required for the formation of a threonylcarbamoyl group on adenosine at position 37 (t(6)A37) in tRNAs that read codons beginning with adenine. Catalyzes the conversion of L-threonine, HCO(3)(-)/CO(2) and ATP to give threonylcarbamoyl-AMP (TC-AMP) as the acyladenylate intermediate, with the release of diphosphate. The polypeptide is Threonylcarbamoyl-AMP synthase (Salmonella choleraesuis (strain SC-B67)).